The following is a 258-amino-acid chain: Snake venom serine protease (258 aa).

The N-terminal stretch at 1–18 (MVLIRVLANLLILQLSYA) is a signal peptide. Residues 19–24 (QKSSEL) constitute a propeptide that is removed on maturation. Residues 25–249 (VIGGDECNIN…YTEWIQSILA (225 aa)) enclose the Peptidase S1 domain. Disulfide bonds link Cys31/Cys163, Cys50/Cys66, Cys98/Cys256, Cys142/Cys210, Cys174/Cys189, and Cys200/Cys225. Catalysis depends on charge relay system residues His65 and Asp110. Asn154 carries an N-linked (GlcNAc...) asparagine glycan. Residue Ser204 is the Charge relay system of the active site.

It belongs to the peptidase S1 family. Snake venom subfamily. In terms of assembly, monomer. In terms of tissue distribution, expressed by the venom gland.

The protein resides in the secreted. Its function is as follows. Snake venom serine protease that may act in the hemostasis system of the prey. This Lachesis stenophrys (Central American bushmaster) protein is Snake venom serine protease.